The following is a 1770-amino-acid chain: AF4/FMR2 family member lilli (1770 aa).

3 stretches are compositionally biased toward low complexity: residues 1–19, 154–204, and 227–269; these read MAQQQQQQQQQQHLQHPHQ, LGHS…YLKQ, and PSSS…GTTP. Disordered stretches follow at residues 1-28, 134-327, 402-660, 761-805, 822-1173, and 1291-1390; these read MAQQQQQQQQQQHLQHPHQNTNSNNQLQ, SRHA…EKDI, TSLL…PGNV, LHSA…LQLP, MQKA…KQGQ, and KHEH…QISK. The segment covering 402-414 has biased composition (polar residues); sequence TSLLTTPPHASQG. The segment covering 434–447 has biased composition (low complexity); sequence KAAAALSPTAAAKP. Over residues 448-461 the composition is skewed to basic and acidic residues; the sequence is LKTEKNHTLEKQDS. Positions 463–474 are enriched in acidic residues; the sequence is LENDLELSESED. Phosphoserine is present on residues serine 470 and serine 472. Residues 483 to 503 show a composition bias toward low complexity; that stretch reads SAGNSSNSSESDSSESGSESS. The segment covering 511–520 has biased composition (basic residues); that stretch reads QHHHHNHHHQ. Over residues 521 to 552 the composition is skewed to low complexity; the sequence is QQQQQLQQQQQQQLLQQKQQHQQILQQQQRQL. Positions 582–614 are enriched in gly residues; that stretch reads FGSGGAGNGGCSTASSGGGGGGSGSGGGSGSSS. Residues 615-625 are compositionally biased toward low complexity; it reads GIGTMSSGSSS. 2 stretches are compositionally biased toward polar residues: residues 626–638 and 647–659; these read NKTPSPTESNKWT and ANQTSSESVSPGN. Positions 768–800 are enriched in low complexity; sequence SDSGTSGSGSTSSSSSSSDSAPGEVVPMPGPGE. The span at 844–854 shows a compositional bias: basic residues; sequence QRQKKPRKKKP. Phosphoserine is present on residues serine 863 and serine 864. Low complexity-rich tracts occupy residues 880–893, 909–928, 994–1028, 1071–1081, and 1111–1131; these read AAAAAAAQAQATAT, QQQSGGSGNLSSASAGSSSQ, ANASAVAAASSSSDEDSSSSTGSTGSKSSSSSSSS, SGSSSPSSSSS, and SQHSQQLSSSECSSSSGSSTS. Positions 900-912 form a DNA-binding region, a.T hook; the sequence is KKGRGRPRKQQQS. 2 positions are modified to phosphoserine: serine 920 and serine 922. Composition is skewed to basic and acidic residues over residues 1295-1312 and 1321-1355; these read PHPVKPEPELDAGYESKF and FQLKQERDRERERERDRDRERERERERDREREREQ. A Phosphoserine modification is found at serine 1442. 2 stretches are compositionally biased toward low complexity: residues 1483–1499 and 1656–1676; these read AAATATAATSTTGTSTA and GNTPSSISPSNSVGSQGSGSN. Disordered stretches follow at residues 1483–1502 and 1656–1683; these read AAATATAATSTTGTSTAPPA and GNTPSSISPSNSVGSQGSGSNTPPGKIV.

The protein belongs to the AF4 family.

It is found in the nucleus. In terms of biological role, has a role in transcriptional regulation. Acts in parallel with the Ras/MAPK and the PI3K/PKB pathways in the control of cell identity and cellular growth. Essential for regulation of the cytoskeleton and cell growth but not for cell proliferation or growth rate. Required specifically for the microtubule-based basal transport of lipid droplets. Plays a partially redundant function downstream of Raf in cell fate specification in the developing eye. Pair-rule protein that regulates embryonic cellularization, gastrulation and segmentation. This Drosophila pseudoobscura pseudoobscura (Fruit fly) protein is AF4/FMR2 family member lilli.